Here is a 192-residue protein sequence, read N- to C-terminus: Fumarylpyruvate hydrolase (192 aa).

Residues glutamate 41, glutamate 43, and aspartate 72 each contribute to the a divalent metal cation site.

Belongs to the FAH family. The cofactor is Mg(2+). Mn(2+) serves as cofactor.

The catalysed reaction is 3-fumarylpyruvate + H2O = fumarate + pyruvate + H(+). It functions in the pathway aromatic compound metabolism; naphthalene degradation. Involved in the catabolism of gentisate (2,5-dihydroxybenzoate) a key intermediates in the aerobic pathways for the metabolism of a large number of aromatic compoun such as naphthalene. Catalyzes the hydrolytic cleavage of fumarylpyruvate to form fumarate and pyruvate. This is Fumarylpyruvate hydrolase from Ralstonia sp.